We begin with the raw amino-acid sequence, 142 residues long: Probable signal recognition particle 19 kDa protein (142 aa).

The segment at 115-142 (KTRQPGYTAPSVASSSAAAAGKKNKKKK) is disordered. The span at 123–135 (APSVASSSAAAAG) shows a compositional bias: low complexity.

The protein belongs to the SRP19 family. Component of a signal recognition particle complex that consists of a 7SL RNA molecule of 300 nucleotides and six protein subunits: srpa-72, srpa-68, SRP54, F37F2.2/SRP19, F25G6.8/SRP14 and ZK512.4/SRP9.

The protein localises to the cytoplasm. It localises to the nucleus. The protein resides in the nucleolus. In terms of biological role, component of the signal recognition particle (SRP) complex, a ribonucleoprotein complex that mediates the cotranslational targeting of secretory and membrane proteins to the endoplasmic reticulum (ER). Binds directly to 7SL RNA. Mediates binding of SRP54 to the SRP complex. This chain is Probable signal recognition particle 19 kDa protein, found in Caenorhabditis elegans.